A 458-amino-acid chain; its full sequence is Phosphomethylpyrimidine synthase (458 aa).

Substrate contacts are provided by residues Asn80, Met109, Tyr139, His175, 195 to 197 (SRG), 236 to 239 (DSLR), and Glu275. His279 is a binding site for Zn(2+). Substrate is bound at residue Tyr302. His343 is a binding site for Zn(2+). 3 residues coordinate [4Fe-4S] cluster: Cys423, Cys426, and Cys431.

The protein belongs to the ThiC family. Requires [4Fe-4S] cluster as cofactor.

The enzyme catalyses 5-amino-1-(5-phospho-beta-D-ribosyl)imidazole + S-adenosyl-L-methionine = 4-amino-2-methyl-5-(phosphooxymethyl)pyrimidine + CO + 5'-deoxyadenosine + formate + L-methionine + 3 H(+). It participates in cofactor biosynthesis; thiamine diphosphate biosynthesis. In terms of biological role, catalyzes the synthesis of the hydroxymethylpyrimidine phosphate (HMP-P) moiety of thiamine from aminoimidazole ribotide (AIR) in a radical S-adenosyl-L-methionine (SAM)-dependent reaction. The chain is Phosphomethylpyrimidine synthase from Acaryochloris marina (strain MBIC 11017).